The primary structure comprises 935 residues: MAFNQRKRRRPVGIADFDEANDEAYESVGFHDYADYFSRKQRKLQNQNAALYKSIDEDSKSDLFHGLAIAINGYTKPSYTELRQMIVSNGGTFIQYVDGKTSISYLVCSFLTPSKARQWKHQKVVKPEWIVDCIKQKKILPWINYRTFQASSAQATLSFVASKPSQPEGNLEDIQTSSQEEEHDNEKDKTKESKAKGFLDDLSGLSASSLHNYQLLKNPNVRNSTTQNQDFLENFFSSSRLHHLSTWKADFKNEIQAMTTASEPVRPIMKDKSKKSRFLLHVDFDCFFASVSTRFSHELRLKPVAVAHGIKNSEIASCNYEARKFGIKNGMYVGTAKNLCPSLRVVDYDFGAYESVSREFYTILVNTLHDYIKVISIDEALLDITSSVSSFQDCFEIAESIRSQVREKTNCEVSVGIGPNVLLARLALRKAKPHNVYSLSIENVFDVLSPLSVQDLPGVGSSQAQKLFNLYGVRTIGQLQRIEKFNLQETFGVNYGLHLYNISRGIDTDIINNETPRRSISVDVNWGVRFVFQEDGIDFLKRLLHELLSRMGKCQVLLHQIQLRILKRADGAPFSPPKYLGAGEVTSFTKSSTFTSATNSFDLIWKKVTSMYKTINVDPGDVRGIGLQALKIIKDNSKIRKDYRSIQSITSRNKVSLKGASVDISSKDKEIISQKKQLSPKLIPSTPYDLPSSSQISSSALAQLPPSMQSDIQQQLRLQKRSITEYPSQLDPLFMVELPTPIRNEVNDNHEIAMNKRLSLKSHADNKIDERGKKKIRQENAFDKLLQISKKSKTINKPNVDYLTLKELPKDLQKQILKESNLQKSDLISEVKLEKPHIVTFQHVQSLEDLRGLLTKWYSKASKGPNIHDVNYFANYVCRVIREEKNLGKAQMMLKWLYQLNRKECNKPWEKAIDKIIETVQGECLQRNIPPLMIF.

In terms of domain architecture, BRCT spans Ser-59–Thr-147. Residues Ser-162–Ser-178 are compositionally biased toward polar residues. The interval Ser-162 to Ser-193 is disordered. Positions Asp-184–Ser-193 are enriched in basic and acidic residues. The segment at Phe-235 to Ser-245 is interaction with target DNA. Residues Arg-240 and Asp-283–Phe-287 each bind dCTP. A UmuC domain is found at Leu-279–Gly-460. The Mg(2+) site is built by Asp-283 and Phe-284. Positions Ile-310–Asn-312 are interaction with target DNA. DCTP-binding positions include Ser-317–Arg-323, Asn-329, and Asp-378. Positions 378 and 379 each coordinate Mg(2+). 2 interaction with target DNA regions span residues Gly-460–Gln-463 and Arg-517–Asn-525.

Belongs to the DNA polymerase type-Y family. Requires Mg(2+) as cofactor.

The protein resides in the nucleus. It is found in the nucleolus. Its subcellular location is the mitochondrion. The protein localises to the cytoplasm. It localises to the cytoskeleton. The protein resides in the spindle. Functionally, deoxycytidyl transferase involved in DNA repair. Transfers a dCMP residue from dCTP to the 3'-end of a DNA primer in a template-dependent reaction. May assist in the first step in the bypass of abasic lesions by the insertion of a nucleotide opposite the lesion. Required for normal induction of mutations by physical and chemical agents. Involved in mitochondrial DNA mutagenesis. The protein is DNA repair protein rev1 of Schizosaccharomyces pombe (strain 972 / ATCC 24843) (Fission yeast).